The sequence spans 289 residues: 33 kDa chaperonin (289 aa).

Cystine bridges form between Cys-237–Cys-239 and Cys-270–Cys-273.

The protein belongs to the HSP33 family. Under oxidizing conditions two disulfide bonds are formed involving the reactive cysteines. Under reducing conditions zinc is bound to the reactive cysteines and the protein is inactive.

It localises to the cytoplasm. Functionally, redox regulated molecular chaperone. Protects both thermally unfolding and oxidatively damaged proteins from irreversible aggregation. Plays an important role in the bacterial defense system toward oxidative stress. In Oceanobacillus iheyensis (strain DSM 14371 / CIP 107618 / JCM 11309 / KCTC 3954 / HTE831), this protein is 33 kDa chaperonin.